The following is a 520-amino-acid chain: Probable glycerol-3-phosphate acyltransferase 3 (520 aa).

A run of 5 helical transmembrane segments spans residues 5-20 (ISIF…RFIL), 64-84 (YFML…LFIL), 88-108 (ISLM…FFGI), 264-284 (TLMN…AAAA), and 286-306 (LFVS…FSGC). Positions 334–339 (HRTLLD) match the HXXXXD motif motif.

Belongs to the GPAT/DAPAT family. In terms of tissue distribution, widely expressed at low level. Expressed at higher level in seedlings and leaves.

The protein localises to the membrane. The catalysed reaction is sn-glycerol 3-phosphate + an acyl-CoA = a 1-acyl-sn-glycero-3-phosphate + CoA. The protein operates within phospholipid metabolism; CDP-diacylglycerol biosynthesis; CDP-diacylglycerol from sn-glycerol 3-phosphate: step 1/3. Esterifies acyl-group from acyl-ACP to the sn-1 position of glycerol-3-phosphate, an essential step in glycerolipid biosynthesis. The sequence is that of Probable glycerol-3-phosphate acyltransferase 3 (GPAT3) from Arabidopsis thaliana (Mouse-ear cress).